The primary structure comprises 699 residues: MSTSTPQSGGRRKPETPDSAFLSPATRPQPISAAATPTLLNFTSNDDERERKLRRMSRVIDLQLSNANSPATAISPAQSRGADTPTSLLPKLNNTQISDHYSTCIKLSQENKITTKNAFGLHLIDYMGDILKHKDSELTNFKVAAGTLDASAKIYAVRVDAVHADVYKVLGGLGKESQATEDTENQETDTGPQDGRKNPKRRKCSYKTIERNLNSINRSETERKSEIDPLFQKAAASFDEFSTAGVFLSTLKCHSYHSELHFDADVKPLSTAEETEPPSPGSMDSTELKSLFLQCVEKRPLCPSLSGFRFMQWNSDAQNENLSLLMDKFKKSDHVFDINAEVEDDFVESEAPVADEFDADVCEGMDAGDIGEFAEHREACRLERKGAQLTQIGNGDIGTMCLQLSSCPGEYSYFSPRTMSMWAGPEHWRFRPRQKASTDSDQQRVKKAKKVFELNFEDDIDFEVHFRKTRAATTLTKSTLESQNKKSTTLPADFHYDPDNIARMSLRPKDRIRKTTVQESVSEPEDDIGDYDYNNPNDTSNFCPALQAADSDDDDGAFLGPESNSAGFSAENQMNITSYGESNLVAGQKVNKIEIQYAKTAKKMDMKRLKSSMWSLLANCPESQEEMPSSKEEIDAALITDEQVFSSVTHGLQKRLPPVMAQNLSVPLAFACLLHLANEKNLKLQGMDDLSDVMIMQDD.

2 disordered regions span residues 1–35 (MSTS…SAAA) and 176–203 (ESQA…KRRK).

The protein belongs to the CND2 (condensin subunit 2) family. In terms of assembly, component of the condensin complex, which contains the XCAP-E/SMC2 and XCAP-C/SMC4 heterodimer, and three non SMC subunits that probably regulate the complex: XCAP-H/NCAPH, XCAP-D2/NCAPD2 and XCAP-G/NCAPG. In terms of processing, phosphorylated by CDK1. Its phosphorylation, as well as that of XCAP-D2 and XCAP-G subunits, activates the condensin complex and is required for chromosome condensation.

The protein resides in the nucleus. It is found in the cytoplasm. Its subcellular location is the chromosome. Functionally, regulatory subunit of the condensin complex, a complex required for conversion of interphase chromatin into mitotic-like condense chromosomes. The condensin complex probably introduces positive supercoils into relaxed DNA in the presence of type I topoisomerases and converts nicked DNA into positive knotted forms in the presence of type II topoisomerase. The sequence is that of Condensin complex subunit 2 (ncaph) from Xenopus laevis (African clawed frog).